The following is a 1377-amino-acid chain: Hemoglobin-binding protease hbp autotransporter (1377 aa).

The signal sequence occupies residues 1 to 52 (MNRIYSLRYSAVARGFIAVSEFARKCVHKSVRRLCFPVLLLIPVLFSAGSLA). A Peptidase S6 domain is found at 53–302 (GTVNNELGYQ…AVIPLDFIGQ (250 aa)). Residues His125, Asp153, and Ser259 each act as charge relay system in the active site. In terms of domain architecture, Autotransporter spans 1111-1377 (DINGEAGTWV…AINANIRYSF (267 aa)).

Post-translationally, cleaved to release the mature protein from the outer membrane.

It localises to the periplasm. The protein localises to the secreted. It is found in the cell surface. The protein resides in the cell outer membrane. With respect to regulation, protease activity is inhibited by 3,4-dichloroisocoumarin. Interacts with hemoglobin, degrades it and subsequently binds the released heme. Could make heme accessible not only for E.coli, but also for B.fragilis during mixed intra-abdominal infections. Has a role in abscess formation. The chain is Hemoglobin-binding protease hbp autotransporter (hbp) from Escherichia coli.